Consider the following 518-residue polypeptide: T-box transcription factor TBX5 (518 aa).

The tract at residues 1–46 (MADADEGFGLAHTPLEPDAKDLPCDSKPESALGAPSKSPSSPQAAF) is disordered. Over residues 15 to 28 (LEPDAKDLPCDSKP) the composition is skewed to basic and acidic residues. The segment covering 34–45 (APSKSPSSPQAA) has biased composition (low complexity). The T-box DNA-binding region spans 58-238 (LHERELWLKF…NNPFAKGFRG (181 aa)). Positions 250–356 (MQSKEYPVVP…PSEEDSFYRS (107 aa)) are disordered. The segment covering 262-301 (TVRQKVASNHSPFSSESRALSTSSNLGSQYQCENGVSGPS) has biased composition (polar residues). Lysine 339 carries the N6-acetyllysine modification.

As to quaternary structure, monomer. Homodimer (via the T-box); binds DNA as homodimer. Interacts (via the T-box) with NKX2-5 (via the homeobox); this complex binds DNA. Interacts with GATA4. Interacts with KAT2A and KAT2B. Acetylation at Lys-339 by KAT2A and KAT2B promotes nuclear retention.

The protein resides in the nucleus. The protein localises to the cytoplasm. DNA-binding protein that regulates the transcription of several genes and is involved in heart development and limb pattern formation. Binds to the core DNA motif of NPPA promoter. This chain is T-box transcription factor TBX5 (TBX5), found in Homo sapiens (Human).